Consider the following 232-residue polypeptide: Ion-translocating oxidoreductase complex subunit E (232 aa).

5 helical membrane-spanning segments follow: residues 39 to 59 (LGLGLATTLVLTLTNLTISSL), 69 to 89 (IPIYVMIIASVVSVVQMLINA), 92 to 112 (FGLYQSLGIFIPLIVTNCIVV), 125 to 145 (ALSALDGFSIGMGATCAMFVL), and 182 to 202 (PFLLAMLPPGAFIGLGMMLAV).

It belongs to the NqrDE/RnfAE family. As to quaternary structure, the complex is composed of six subunits: RnfA, RnfB, RnfC, RnfD, RnfE and RnfG.

The protein resides in the cell inner membrane. Functionally, part of a membrane-bound complex that couples electron transfer with translocation of ions across the membrane. This chain is Ion-translocating oxidoreductase complex subunit E, found in Klebsiella pneumoniae (strain 342).